A 165-amino-acid chain; its full sequence is Glycine cleavage system H protein, mitochondrial (165 aa).

The N-terminal 31 residues, 1-31, are a transit peptide targeting the mitochondrion; the sequence is MALRIWASSTAKALRLSSASRPHFSPLFRCF. The Lipoyl-binding domain maps to 55–137; it reads VATIGITDHA…YEDGWMIKVK (83 aa). Lysine 96 is subject to N6-lipoyllysine.

The protein belongs to the GcvH family. As to quaternary structure, the glycine cleavage system is composed of four components that only loosely associate: the P protein (EC 1.4.4.2), the T protein (EC 2.1.2.10), the L protein (EC 1.8.1.4) and the lipoyl-bearing H protein. (R)-lipoate serves as cofactor. As to expression, expressed in roots, stems and leaves.

It localises to the mitochondrion. The glycine cleavage system catalyzes the degradation of glycine. The H protein shuttles the methylamine group of glycine from the P protein to the T protein. The sequence is that of Glycine cleavage system H protein, mitochondrial (GDCSH) from Flaveria trinervia (Clustered yellowtops).